Reading from the N-terminus, the 157-residue chain is Probable succinate transporter subunit YjjB (157 aa).

Transmembrane regions (helical) follow at residues 8 to 28 (LALA…AMVF), 50 to 70 (MILM…SMLV), 87 to 107 (VFTV…TAMI), and 129 to 149 (FLTA…PGLW).

This sequence belongs to the ThrE exporter (TC 2.A.79) family. In terms of assembly, the transporter is composed of YjjB and YjjP.

It localises to the cell inner membrane. In terms of biological role, involved in succinate export with YjjP. Both proteins are required for export. In Shigella flexneri serotype 5b (strain 8401), this protein is Probable succinate transporter subunit YjjB.